Reading from the N-terminus, the 2230-residue chain is MPTRQPSKYGNKFRSSSASFKPKRTKTVEFSSLRSTEATSQDEKFEAIRLANSIDEALGFPRFESGEKRVGWLINMHSTSIEDPNVPGGRAGVDYYFLEDGGGSFKATVEYDPYFLLAVKKGHEAEVEEWCRRMFEGLIKTIKRVEKEDLQLPNHLLGHRRTFLQLNFANVSHLLDVRKTLLPLAEKNKKNVNVMDTYAEISSANAGFDLFDDELINESRPNSNMNASDYIIDIREYDVPYHVRVAIDKDIRIGKWYTVEAKHGVISLTCLEERLQRADPVILAFDIETTKLPLKFPDSVIDQIMMISYMIDGQGFLITNREIVSEDIRDFEYTPKPEYSGPFMIFNEPNERSVIERFFEHIKEAKPTVIATYNGDFFDWPFVEARASVLGIDMYKEIGFRKNSEDIYQSDHCVHMDCFAWVNRDSYLPQGSRGLKAVTVAKLGYDPDELDPELMTPYASERPQTLAEYSVSDAVATYYLYMKYVHPFIFSLCTIIPLNPDDTLRKGTGTLCEMLLMVQAYKGEIVLPNKHKDPPESFYEGHLLESETYVGGHVESIEAGVFRSDIPVTFNIDTTAIDELLRDLDAALKFSIEVEEKKSMDDVVNYEDVKAQIAERLVNLREKPHRDEVPSIYHLDVASMYPNIMITNRLQPDSMIQESDCAACDFNRPGKTCDRRLPWAWRGEFLPAKRDEYNMIRQAVANELFPGRTKNSPMRSFGEMSAEEQAAIIKKRLQDYSKKIYHKIHDSKTIVREAIICQRENPFYVDTVRSFRDRRYDFKGKQKVWKGKTEALKAAGASAAEIEEAKKMIVLFDSLQLAHKVILNSFYGYVMRKGSRWYSMEMAGVTCLTGAHIIQMARELVERIGRPLELDTDGIWCMLPGSFPEDFSFTLKNGKKLGISYPCVMLNHLVHGKYTNHQYQTLVDPKTFRYETHSDNSIFFEVDGPYKAMILPTSKEEDKNLKKRYAVFNHDGSLAELKGFEVKRRGELKLIKIFQTQIFRFFLEGSTLEETYAAVARVADRWLDVLYDHGATLADEELIELISENRSMTKTLEEYGNQKSTSITTARRLAEFLGEQMVKDKGLNCKYIISAKPKNTPVTERAIPVTIFSAEEPVKRFFLRKWLKDDPGDMDPRSVIDWDYYLERLGSVVQKLITIPAALQKVRNPVPRVAHPDWLQRRINMKEDKFKQTKMTDMFGKTEKNPLSNISTNILDHRVQHHGDIGEAVANSTQKLKSSPNGKISQKRKHPEGLTKTLLDPFASLPAIMPSLNDDYVGFLKYQKQKWKIQKQARARRRQLFGERVNVATDSLSNLFRNQAELLYINTWQILQLCETGRPGLVRAFVLIDRKIHALTIKVPRQIYVNLKRDSLPDVDVPDCEVEKVNHTLPNGHPSVHLFKLTLSEDTYLRETDKIDALLQHPSIEGVYEKNIPLSVRAVLKLGSVCTFDEEQRGVLGEGLDRGFNLSTLCHTTPDEPYLLNSPLVYHYLYHVLSGDRQIFALFSTTKSEAHIVILNRTRDVQGLPNVDKIYAELRARTMENMGGDQSQNAFEYQEKIHFKTTQVTTRRKAYLEIGDLIKKLKGEETQPVIMVIQSHQRHRLCHDIPILKEYPVLPVKPEVSDMDLPPLGWQSFIAKRLVTHYLYLASWIHHLTMLARYGDVPLCNLENDDPRYLIDISYARRLQQNNVVLWWSNGPRPDHAGYEKDDVTGSLERVSMPSVNVPSAYNTVCIELEVRNLSINTILTSSIINELEGADTLLASSEPSADANGSGVLYSEKAFASAGAVVLREMVKHWWSEACEGNNMADIMVQHLIRWVESPVSCLYDRSLHDYVRMLSRKSFQRLMAEFRRVGSNVIFASPTRLLLQTTKTEVGNAYAYSQYVLKSIRANASFHFIDLEIKEYWDYLVWYDEYNYGGKGCRKVTGSEDQELETVMHWQLSRFLPAPMQTIFHDWVVEYIELMHGLKRTDSDDSSTPRLTQLPVGNHNEDNDEITSILAEKFSKPLKKQISGLIRRQRDELLHPELASDYVFPVLPGVLVDPNNDKRNPVLELVKLLMQVLSLSKTTTLETRLLRRELLAMFEVREFSKEGRFENPGASLKLPELSCNACCLIRDLDLCRDEDVLPEMGSDPNKAAPKPWRCPFCQTEYDRLAQEEALIGQVQGLIVGWQTQDLKCSKCGGLKISDFMEHCSCSGHWVETMDRNEVEKKLLLLSSVSKFHGLKLLESVVQGVLEQM.

A compositionally biased stretch (polar residues) spans 1–19 (MPTRQPSKYGNKFRSSSAS). Residues 1 to 24 (MPTRQPSKYGNKFRSSSASFKPKR) are disordered. Positions 2101, 2104, 2136, and 2139 each coordinate Zn(2+). Residues 2101 to 2139 (CNACCLIRDLDLCRDEDVLPEMGSDPNKAAPKPWRCPFC) form a CysA-type zinc finger. 4 residues coordinate [4Fe-4S] cluster: Cys2170, Cys2173, Cys2185, and Cys2187. The CysB motif motif lies at 2170-2187 (CSKCGGLKISDFMEHCSC).

Belongs to the DNA polymerase type-B family. As to quaternary structure, heterotetramer. Consists of 4 subunits: pol2, dpb2, dpb3 and dpb4. [4Fe-4S] cluster serves as cofactor.

The protein localises to the nucleus. It carries out the reaction DNA(n) + a 2'-deoxyribonucleoside 5'-triphosphate = DNA(n+1) + diphosphate. Its function is as follows. DNA polymerase II participates in chromosomal DNA replication. The protein is DNA polymerase epsilon catalytic subunit A (pol2) of Aspergillus fumigatus (strain ATCC MYA-4609 / CBS 101355 / FGSC A1100 / Af293) (Neosartorya fumigata).